Consider the following 493-residue polypeptide: Chaperone SurA (493 aa).

The first 33 residues, 1–33 (MKRQAFSLLSRLNPWQQLLLSAVLVTLAAPAAA), serve as a signal peptide directing secretion. The interval 46 to 76 (FTQQGSQSASQGSTVAPSQPMMGVPQPSSQP) is disordered. The segment covering 48 to 58 (QQGSQSASQGS) has biased composition (low complexity). 2 consecutive PpiC domains span residues 230-332 (PTEF…KLVS) and 346-444 (IAQT…QVEN).

The protein resides in the periplasm. It carries out the reaction [protein]-peptidylproline (omega=180) = [protein]-peptidylproline (omega=0). Chaperone involved in the correct folding and assembly of outer membrane proteins. Recognizes specific patterns of aromatic residues and the orientation of their side chains, which are found more frequently in integral outer membrane proteins. May act in both early periplasmic and late outer membrane-associated steps of protein maturation. In Cupriavidus metallidurans (strain ATCC 43123 / DSM 2839 / NBRC 102507 / CH34) (Ralstonia metallidurans), this protein is Chaperone SurA.